A 228-amino-acid chain; its full sequence is MKDVKALKLMTLNDVLSQINGDMTLGIGTGSTMELLLPQMAQLIKERGYNITGVCTSNKIAFLAKELGIKICEINDVDHIDLAIDGADEVDPSLNIIKGGGGALFREKVIDEMASRFVVVVDETKMVQYLGETFKLPVEVDKFNWYHILRKIESYADIKVERRVNEDVAFITDNGNYILDCKLPKGIDPYKFHEYLIHLTGVFETGYFLDMADQVIVGTQEGVKILEK.

Substrate is bound by residues 29-32 (TGST), 85-88 (DGAD), and 98-101 (KGGG). Residue E107 is the Proton acceptor of the active site. K125 lines the substrate pocket.

It belongs to the ribose 5-phosphate isomerase family. Homodimer.

It carries out the reaction aldehydo-D-ribose 5-phosphate = D-ribulose 5-phosphate. It functions in the pathway carbohydrate degradation; pentose phosphate pathway; D-ribose 5-phosphate from D-ribulose 5-phosphate (non-oxidative stage): step 1/1. Functionally, catalyzes the reversible conversion of ribose-5-phosphate to ribulose 5-phosphate. This is Ribose-5-phosphate isomerase A from Staphylococcus aureus (strain MRSA252).